Here is a 370-residue protein sequence, read N- to C-terminus: MEHRIYNSNYFLDITIPYFFHPEILIRIFRRHIQDIPFLHFLRTLLYKNKCLNILNIENFFYLKKNQFFCFLWNFYIYEFEYLLNDIWEKFYKFESVFFWNFIDKTNSIKKIKHILKKSKKPIEKKIVKKISSIHYIRYKNNLIITLNDRNILILENWKDFFLIFWQKYFNVWFKSSRILIQNFYKNSFSFLGYMFRIESQIILIQIQIINLLRNVNLIKKEFCSIIPVIPLIRLLAKEKFCDVLGRPLCKLSWTTLSDNEIFERFDQIIKHIFSYYSGCINKKGLYQLQYIFRFSCAKTLACKHKSTIRTVWKKYGSNLLTSSIFFNKTKLISLNFSNKNPYKKNFWYLNIIQVNYLAHSLQKSKLLKE.

Belongs to the intron maturase 2 family. MatK subfamily.

It localises to the plastid. The protein resides in the chloroplast. Functionally, usually encoded in the trnK tRNA gene intron. Probably assists in splicing its own and other chloroplast group II introns. The protein is Maturase K of Marchantia polymorpha (Common liverwort).